Consider the following 306-residue polypeptide: Phosphatidate cytidylyltransferase (306 aa).

The tract at residues 1–28 is disordered; that stretch reads MTTNDAGTGNPAEQPARGAKQQPATETS. The next 8 helical transmembrane spans lie at 36-56, 82-102, 103-123, 151-171, 180-200, 218-238, 241-261, and 285-305; these read AAIV…VFVP, GYLI…WLTW, PFGA…CMIW, ATVF…MLVY, FCMM…GVLF, FAGS…FLVG, PWIG…GDLV, and MDRL…LTLL.

This sequence belongs to the CDS family.

The protein localises to the cell membrane. It carries out the reaction a 1,2-diacyl-sn-glycero-3-phosphate + CTP + H(+) = a CDP-1,2-diacyl-sn-glycerol + diphosphate. The protein operates within phospholipid metabolism; CDP-diacylglycerol biosynthesis; CDP-diacylglycerol from sn-glycerol 3-phosphate: step 3/3. The chain is Phosphatidate cytidylyltransferase (cdsA) from Mycobacterium bovis (strain ATCC BAA-935 / AF2122/97).